The sequence spans 117 residues: uncharacterized protein (117 aa).

The segment at 1-20 (METKKLIGKPLQPARPVRHL) is disordered.

This is an uncharacterized protein from Homo sapiens (Human).